The sequence spans 274 residues: Cytochrome c oxidase subunit 3 (274 aa).

Over 2–15 the chain is Cytoplasmic; sequence AHVKNHDYQILPPS. The helical transmembrane segment at 16 to 36 threads the bilayer; that stretch reads IWPFFGAIGAFVMLTGAVAWM. At 37–48 the chain is on the periplasmic side; the sequence is KGITFFGLPVEG. Residues 49 to 77 form a helical membrane-spanning segment; sequence PWMFLIGLVGVLYVMFGWWADVVNEGETG. The Cytoplasmic segment spans residues 78–79; it reads EH. Residues 80 to 115 form a helical membrane-spanning segment; sequence TPVVRIGLQYGFILFIMSEVMFFVAWFWAFIKNALY. The Periplasmic portion of the chain corresponds to 116–139; the sequence is PMGPDSPIKDGVWPPEGIVTFDPW. The helical transmembrane segment at 140–166 threads the bilayer; the sequence is HLPLINTLILLLSGVAVTWAHHAFVLE. Residues 167–168 lie on the Cytoplasmic side of the membrane; sequence GD. The chain crosses the membrane as a helical span at residues 169–197; sequence RKTTINGLIVAVILGVCFTGLQAYEYSHA. Over 198-203 the chain is Periplasmic; that stretch reads AFGLAD. Residues 204 to 237 traverse the membrane as a helical segment; it reads TVYAGAFYMATGFHGAHVIIGTIFLFVCLIRLLK. At 238–244 the chain is on the cytoplasmic side; sequence GQMTQKQ. A helical transmembrane segment spans residues 245–274; it reads HVGFEAAAWYWHFVDVVWLFLFVVIYIWGR.

The protein belongs to the cytochrome c oxidase subunit 3 family.

It localises to the cell inner membrane. It catalyses the reaction 4 Fe(II)-[cytochrome c] + O2 + 8 H(+)(in) = 4 Fe(III)-[cytochrome c] + 2 H2O + 4 H(+)(out). This is Cytochrome c oxidase subunit 3 (ctaE) from Paracoccus denitrificans.